Here is a 550-residue protein sequence, read N- to C-terminus: Transcriptional repressor RHIT (550 aa).

Disordered regions lie at residues 1–67 (MSAD…ETRA), 174–200 (VQGK…VVEV), and 216–296 (KSFK…EGLA). Basic and acidic residues-rich tracts occupy residues 11-22 (AQDKERARETPG), 45-58 (ESPH…EPHP), and 187-200 (LGHE…VVEV). The 70-residue stretch at 124–193 (VTFEDMALYL…SRQLGHEEEE (70 aa)) folds into the KRAB domain. A Glycyl lysine isopeptide (Lys-Gly) (interchain with G-Cter in SUMO2) cross-link involves residue lysine 216. Residues 267-281 (DLPKTQEGHFPEQPR) are compositionally biased toward basic and acidic residues. The residue at position 290 (serine 290) is a Phosphoserine. C2H2-type zinc fingers lie at residues 306–328 (YKCE…RRTH), 334–356 (YACT…QIIH), 362–384 (YTCP…QRIH), 390–412 (YVCD…QGTH), 418–440 (HKCP…QRTH), 446–468 (YPCP…NRTH), 474–496 (YHCL…QRTH), and 502–524 (YSCP…EKIH).

Belongs to the krueppel C2H2-type zinc-finger protein family.

It localises to the nucleus. Transcriptional repressor involved in regulating MPV17L expression. By regulating MPV17L expression, contributes to the regulation of genes involved in H(2)O(2) metabolism and the mitochondrial apoptotic cascade. The polypeptide is Transcriptional repressor RHIT (ZNF205) (Bos taurus (Bovine)).